Here is a 118-residue protein sequence, read N- to C-terminus: MPRVKRGVTARARHKKVIDAAKGYRGRRNNVYRIAKQAVMRAGQYAYRDRRNKKRVFRALWIARINAATREHGMTYSVFMNGLKKASIELDRKVLSDMAIHDKPAFAAIVNQVKATVA.

It belongs to the bacterial ribosomal protein bL20 family.

Its function is as follows. Binds directly to 23S ribosomal RNA and is necessary for the in vitro assembly process of the 50S ribosomal subunit. It is not involved in the protein synthesizing functions of that subunit. This is Large ribosomal subunit protein bL20 from Cupriavidus metallidurans (strain ATCC 43123 / DSM 2839 / NBRC 102507 / CH34) (Ralstonia metallidurans).